Here is a 427-residue protein sequence, read N- to C-terminus: MRHLGAFLFLLGVLGALTEMCEIPEMDSHLVEKLGQHLLPWMDRLSLEHLNPSIYVGLRLSSLQAGTKEDLYLHSLKLGYQQCLLGSAFSEDDGDCQGKPSMGQLALYLLALRANCEFVRGHKGDRLVSQLKWFLEDEKRAIGHDHKGHPHTSYYQYGLGILALCLHQKRVHDSVVDKLLYAVEPFHQGHHSVDTAAMAGLAFTCLKRSNFNPGRRQRITMAIRTVREEILKAQTPEGHFGNVYSTPLALQFLMTSPMRGAELGTACLKARVALLASLQDGAFQNALMISQLLPVLNHKTYIDLIFPDCLAPRVMLEPAAETIPQTQEIISVTLQVLSLLPPYRQSISVLAGSTVEDVLKKAHELGGFTYETQASLSGPYLTSVMGKAAGEREFWQLLRDPNTPLLQGIADYRPKDGETIELRLVSW.

An N-terminal signal peptide occupies residues 1 to 18 (MRHLGAFLFLLGVLGALT). Disulfide bonds link C21–C267, C83–C96, C116–C309, and C165–C205. Cob(II)alamin is bound by residues Q104, 152-156 (TSYYQ), H190, 190-194 (HHSVD), N242, S245, Q291, and 395-397 (WQL).

The protein belongs to the eukaryotic cobalamin transport proteins family. As to quaternary structure, interacts with CD320 (via LDL-receptor class A domains).

The protein resides in the secreted. Primary vitamin B12-binding and transport protein. Delivers cobalamin to cells. The protein is Transcobalamin-2 (TCN2) of Homo sapiens (Human).